Here is a 300-residue protein sequence, read N- to C-terminus: Tyrosine recombinase XerD (300 aa).

In terms of domain architecture, Core-binding (CB) spans 5–90 (YQCDPLIDAF…SLRRFYNYLL (86 aa)). The Tyr recombinase domain maps to 111–294 (HLPDSLSESQ…ARARLQELHQ (184 aa)). Residues arginine 151, lysine 175, histidine 246, arginine 249, and histidine 272 contribute to the active site. Tyrosine 281 serves as the catalytic O-(3'-phospho-DNA)-tyrosine intermediate.

This sequence belongs to the 'phage' integrase family. XerD subfamily. As to quaternary structure, forms a cyclic heterotetrameric complex composed of two molecules of XerC and two molecules of XerD.

The protein resides in the cytoplasm. Site-specific tyrosine recombinase, which acts by catalyzing the cutting and rejoining of the recombining DNA molecules. The XerC-XerD complex is essential to convert dimers of the bacterial chromosome into monomers to permit their segregation at cell division. It also contributes to the segregational stability of plasmids. In Shewanella oneidensis (strain ATCC 700550 / JCM 31522 / CIP 106686 / LMG 19005 / NCIMB 14063 / MR-1), this protein is Tyrosine recombinase XerD.